The sequence spans 1337 residues: Activated Cdc42 kinase-like (1337 aa).

Position 71 is a phosphoserine (Ser71). The 267-residue stretch at 133–399 folds into the Protein kinase domain; sequence ISVNKQLGTG…GEIYDQLPDM (267 aa). ATP is bound by residues 139-147 and Lys164; that span reads LGTGEFGIV. Residue Asp260 is the Proton acceptor of the active site. A phosphotyrosine mark is found at Tyr291 and Tyr292. The 62-residue stretch at 399 to 460 folds into the SH3 domain; it reads MKPEQLKAVV…NPSNTVAFLE (62 aa). A CRIB domain is found at 488 to 502; sequence ISKPQNDFKHTGHVG. The disordered stretch occupies residues 714-739; that stretch reads SGDTNGNKHGHGLLPTLSKKKSSGTV. A phosphoserine mark is found at Ser764 and Ser778. Residues 786–822 form a disordered region; it reads RFPHLSNNGSGDKSGGLGTSGSAHTPTHGNASPFPKK. Over residues 805–815 the composition is skewed to polar residues; sequence SGSAHTPTHGN. Phosphoserine occurs at positions 831, 918, and 924. 2 disordered regions span residues 906–969 and 1024–1045; these read AGLS…TSTK and PSGMRRPSRPSEREYENMPTVG. Over residues 947–957 the composition is skewed to pro residues; sequence PESPNPIPLPP.

The protein belongs to the protein kinase superfamily. Tyr protein kinase family.

The catalysed reaction is L-tyrosyl-[protein] + ATP = O-phospho-L-tyrosyl-[protein] + ADP + H(+). In terms of biological role, likely to act as a downstream effector of Cdc42 during dorsal closure, acting in a kinase independent manner with the other ACK family member Ack to positively regulate expression of the myosin zip by promoting the endocytosis of Egfr in the amnioserosa (AS). In Drosophila melanogaster (Fruit fly), this protein is Activated Cdc42 kinase-like.